The chain runs to 302 residues: Coiled-coil domain-containing protein 2 (302 aa).

An N-terminal signal peptide occupies residues 1-22; that stretch reads MKNFGLLVVCLSLATLVIPSDG. Residues 198 to 234 are a coiled coil; it reads FADAMEKKAEALENAAEAAAEYISDQSEEVDDLSEEV. Residues 221-257 form a disordered region; sequence SDQSEEVDDLSEEVLDDDSDENDSTSSESEVEDSDVD. Acidic residues predominate over residues 223–257; sequence QSEEVDDLSEEVLDDDSDENDSTSSESEVEDSDVD. The N-linked (GlcNAc...) asparagine glycan is linked to N242.

Component of the acid-insoluble organic matrix of calcified layers of the shell (at protein level).

It localises to the secreted. This is Coiled-coil domain-containing protein 2 from Lottia gigantea (Giant owl limpet).